We begin with the raw amino-acid sequence, 294 residues long: Indole-3-glycerol phosphate synthase (294 aa).

It belongs to the TrpC family.

It carries out the reaction 1-(2-carboxyphenylamino)-1-deoxy-D-ribulose 5-phosphate + H(+) = (1S,2R)-1-C-(indol-3-yl)glycerol 3-phosphate + CO2 + H2O. It participates in amino-acid biosynthesis; L-tryptophan biosynthesis; L-tryptophan from chorismate: step 4/5. The chain is Indole-3-glycerol phosphate synthase from Parasynechococcus marenigrum (strain WH8102).